The sequence spans 201 residues: Large ribosomal subunit protein uL4 (201 aa).

The interval T43–G71 is disordered.

Belongs to the universal ribosomal protein uL4 family. In terms of assembly, part of the 50S ribosomal subunit.

In terms of biological role, one of the primary rRNA binding proteins, this protein initially binds near the 5'-end of the 23S rRNA. It is important during the early stages of 50S assembly. It makes multiple contacts with different domains of the 23S rRNA in the assembled 50S subunit and ribosome. Its function is as follows. Forms part of the polypeptide exit tunnel. The polypeptide is Large ribosomal subunit protein uL4 (Psychromonas ingrahamii (strain DSM 17664 / CCUG 51855 / 37)).